A 433-amino-acid polypeptide reads, in one-letter code: Glutamate-1-semialdehyde 2,1-aminomutase (433 aa).

An N6-(pyridoxal phosphate)lysine modification is found at Lys273.

The protein belongs to the class-III pyridoxal-phosphate-dependent aminotransferase family. HemL subfamily. Homodimer. Pyridoxal 5'-phosphate is required as a cofactor.

The protein localises to the cytoplasm. It carries out the reaction (S)-4-amino-5-oxopentanoate = 5-aminolevulinate. Its pathway is porphyrin-containing compound metabolism; protoporphyrin-IX biosynthesis; 5-aminolevulinate from L-glutamyl-tRNA(Glu): step 2/2. It functions in the pathway porphyrin-containing compound metabolism; chlorophyll biosynthesis. The protein is Glutamate-1-semialdehyde 2,1-aminomutase (hemL) of Synechocystis sp. (strain ATCC 27184 / PCC 6803 / Kazusa).